A 927-amino-acid chain; its full sequence is MDVPEPQPDPDGGDGPGHEPGGSPQDELDFSILFDYDYLNPIEEEPIAHKAISSPSGLAYPDDVLDYGLKPCNPLASLSGEPPGRFGEPDSIGFQNFLSPVKPAGASGPSPRIEITPSHELMQAGGALRGRDAGLSPEQPALALAGVAASPRFTLPVPGYEGYREPLCLSPASSGSSASFISDTFSPYTSPCVSPNNAGPDDLCPQFQNIPAHYSPRTSPIMSPRTSLAEDSCLGRHSPVPRPASRSSSPGAKRRHSCAEALVAPLPAASPQRSRSPSPQPSPHVALQDDSIPAGYPPTAGSAVLMDALNTLATDSPCGIPSKIWKTSPDPTPVSTAPSKAGLARHIYPTVEFLGPCEQEERRNSAPESILLVPPTWPKQLVPAIPICSIPVTASLPPLEWPLSNQSGSYELRIEVQPKPHHRAHYETEGSRGAVKAPTGGHPVVQLHGYMENKPLGLQIFIGTADERILKPHAFYQVHRITGKTVTTTSYEKIVGNTKVLEIPLEPKNNMRATIDCAGILKLRNADIELRKGETDIGRKNTRVRLVFRVHVPEPSGRIVSLQAASNPIECSQRSAHELPMVERQDMDSCLVYGGQQMILTGQNFTAESKVVFMEKTTDGQQIWEMEATVDKDKSQPNMLFVEIPEYRNKHIRVPVKVNFYVINGKRKRSQPQHFTYHPVPAIKTEPSDEYEPSLICSPAHGGLGSQPYYPQHPMLAESPSCLVATMAPCQQFRSGLSSPDARYQQQSPAAALYQRSKSLSPGLLGYQQPSLLAAPLGLADAHRSVLVHAGSQGQGQGSTLPHTSSASQQASPVIHYSPTNQQLRGGGHQEFQHIMYCENFGPSSARPGPPPINQGQRLSPGAYPTVIQQQTAPSQRAAKNGPSDQKEALPTGVTVKQEQNLDQTYLDDVNEIIRKEFSGPPSRNQT.

Residues 1–29 (MDVPEPQPDPDGGDGPGHEPGGSPQDELD) form a disordered region. Residues Ser-23, Ser-53, Ser-54, Ser-56, Ser-99, Ser-107, and Ser-110 each carry the phosphoserine modification. The segment at 111–116 (PRIEIT) is calcineurin-binding. A transactivation domain A (TAD-A) region spans residues 119 to 201 (HELMQAGGAL…CVSPNNAGPD (83 aa)). Phosphoserine is present on residues Ser-136, Ser-150, Ser-170, Ser-173, Ser-174, Ser-176, Ser-177, Ser-179, and Ser-182. The tract at residues 163 to 177 (YREPLCLSPASSGSS) is required for cytoplasmic retention of the phosphorylated form. 2 consecutive repeat copies span residues 186 to 202 (SPYTSPCVSPNNAGPDD) and 215 to 231 (SPRTSPIMSPRTSLAED). A 3 X approximate SP repeats region spans residues 186-292 (SPYTSPCVSP…PHVALQDDSI (107 aa)). Disordered regions lie at residues 203–299 (LCPQ…YPPT) and 322–341 (SKIWKTSPDPTPVSTAPSKA). A phosphoserine mark is found at Ser-215, Ser-219, Ser-223, Ser-238, and Ser-245. Positions 216–226 (PRTSPIMSPRT) are enriched in polar residues. Positions 253-255 (KRR) match the Nuclear localization signal motif. Ser-257, Ser-270, Ser-276, Ser-278, Ser-282, Ser-328, and Ser-365 each carry phosphoserine. Over residues 267–277 (PAASPQRSRSP) the composition is skewed to low complexity. Residues 274 to 290 (SRSPSPQPSPHVALQDD) form a 3; approximate repeat. The region spanning 394–576 (ASLPPLEWPL…NPIECSQRSA (183 aa)) is the RHD domain. A DNA-binding region spans residues 423-430 (RAHYETEG). Residues Ser-757, Ser-759, and Ser-761 each carry the phosphoserine modification. Disordered regions lie at residues 790-812 (AGSQGQGQGSTLPHTSSASQQAS) and 841-903 (FGPS…QNLD). Residues 798–812 (GSTLPHTSSASQQAS) show a composition bias toward polar residues. At Ser-860 the chain carries Phosphoserine.

Member of the multicomponent NFATC transcription complex that consists of at least two components, a pre-existing cytoplasmic component NFATC2 and an inducible nuclear component NFATC1. Other members such as NFATC4, NFATC3 or members of the activating protein-1 family, MAF, GATA4 and Cbp/p300 can also bind the complex. The phosphorylated form specifically interacts with XPO1; which mediates nuclear export. NFATC proteins bind to DNA as monomers. Interacts with NFATC2IP. Interacts with FOXP3. Interacts with TBX21 ('Thr-302' phosphorylated form). Interacts with KAT2A. Interacts with HOMER2 and HOMER3; this interaction competes with calcineurin/PPP3CA-binding and hence prevents NFATC2 dephosphorylation and activation. Interacts with protein phosphatase PPP3CA/calcineurin A. Interacts with AKAP5 (via leucine zipper domain); this is required for NFATC2/NFAT1 recruitment to CRAC channels. In resting cells, phosphorylated by NFATC-kinase on at least 18 sites in the 99-365 region. Upon cell stimulation, all these sites except Ser-245 are dephosphorylated by calcineurin. Dephosphorylation induces a conformational change that simultaneously exposes an NLS and masks an NES, which results in nuclear localization. Simultaneously, one site among Ser-53; Ser-54 and Ser-56 is phosphorylated; which is required for full transcriptional activity. In terms of processing, ubiquitinated in endothelial cells by RNF213 downstream of the non-canonical Wnt signaling pathway, leading to its degradation by the proteasome. In terms of tissue distribution, expressed in spleen, heart, testis, brain, placenta, muscle and pancreas. Expressed in the thymus. Expressed in the lung. Expressed in cartilage.

The protein localises to the cytoplasm. It is found in the nucleus. Functionally, plays a role in the inducible expression of cytokine genes in T cells, especially in the induction of the IL-2, IL-3, IL-4, TNF-alpha or GM-CSF. Promotes invasive migration through the activation of GPC6 expression and WNT5A signaling pathway. Is involved in the negative regulation of chondrogenesis. Recruited by AKAP5 to ORAI1 pore-forming subunit of CRAC channels in Ca(2+) signaling microdomains where store-operated Ca(2+) influx is coupled to calmodulin and calcineurin signaling and activation of NFAT-dependent transcriptional responses. In Mus musculus (Mouse), this protein is Nuclear factor of activated T-cells, cytoplasmic 2 (Nfatc2).